Reading from the N-terminus, the 956-residue chain is Golgin candidate 5 (956 aa).

2 disordered regions span residues 70–230 (MSFM…QHKI) and 278–298 (IFES…SSDE). Composition is skewed to basic and acidic residues over residues 77-89 (SDEK…DSVR) and 118-129 (ANKETNVRREAD). 2 stretches are compositionally biased toward polar residues: residues 160–177 (EYSL…SLQP) and 184–193 (TASQDSQPEQ). The segment covering 206-219 (SEAKEVTVENKDTV) has biased composition (basic and acidic residues). Residues 333–765 (SDSADVILEL…LIQKDLEREK (433 aa)) adopt a coiled-coil conformation. Position 793 is a phosphoserine (Ser793). Residues 851 to 951 (SAYEATLRQK…EMYREQVNML (101 aa)) adopt a coiled-coil conformation.

As to quaternary structure, interacts with RABH1B and RABH1C, but not with RABD1 or RABD2A.

Its subcellular location is the golgi apparatus. The protein localises to the cytoplasm. Functionally, golgi matrix protein playing a role in tethering of vesicles to Golgi membranes and in maintaining the overall structure of the Golgi apparatus. This is Golgin candidate 5 (GC5) from Arabidopsis thaliana (Mouse-ear cress).